Reading from the N-terminus, the 81-residue chain is NAD(P)H-quinone oxidoreductase subunit L (81 aa).

The next 2 membrane-spanning stretches (helical) occupy residues 13-33 and 51-71; these read LLVI…IPLF and LGIY…APFL.

The protein belongs to the complex I NdhL subunit family. In terms of assembly, NDH-1 can be composed of about 15 different subunits; different subcomplexes with different compositions have been identified which probably have different functions.

The protein localises to the cellular thylakoid membrane. It carries out the reaction a plastoquinone + NADH + (n+1) H(+)(in) = a plastoquinol + NAD(+) + n H(+)(out). It catalyses the reaction a plastoquinone + NADPH + (n+1) H(+)(in) = a plastoquinol + NADP(+) + n H(+)(out). In terms of biological role, NDH-1 shuttles electrons from an unknown electron donor, via FMN and iron-sulfur (Fe-S) centers, to quinones in the respiratory and/or the photosynthetic chain. The immediate electron acceptor for the enzyme in this species is believed to be plastoquinone. Couples the redox reaction to proton translocation, and thus conserves the redox energy in a proton gradient. Cyanobacterial NDH-1 also plays a role in inorganic carbon-concentration. The polypeptide is NAD(P)H-quinone oxidoreductase subunit L (Synechococcus sp. (strain WH7803)).